A 288-amino-acid polypeptide reads, in one-letter code: Undecaprenyl-diphosphatase (288 aa).

Helical transmembrane passes span 11-31, 49-69, 94-114, 129-149, 159-179, 199-219, 234-254, and 265-285; these read LDLW…FLPI, PGVA…LSYF, AQMG…GLLI, LAAI…AEQL, LRLA…IPGV, AARF…LVEL, VLAI…AWLL, and FVVY…TGTL.

This sequence belongs to the UppP family.

The protein resides in the cell inner membrane. The catalysed reaction is di-trans,octa-cis-undecaprenyl diphosphate + H2O = di-trans,octa-cis-undecaprenyl phosphate + phosphate + H(+). Its function is as follows. Catalyzes the dephosphorylation of undecaprenyl diphosphate (UPP). Confers resistance to bacitracin. In Synechococcus elongatus (strain ATCC 33912 / PCC 7942 / FACHB-805) (Anacystis nidulans R2), this protein is Undecaprenyl-diphosphatase.